An 83-amino-acid chain; its full sequence is Small integral membrane protein 22 (83 aa).

The chain crosses the membrane as a helical span at residues 32 to 52; it reads VAFIVFLTFMGTVLLLLLLVV. The segment at 60-83 is disordered; sequence SPGPRRESPRKERPKGVDNLALEP. Residues 63-75 show a composition bias toward basic and acidic residues; that stretch reads PRRESPRKERPKG.

Interacts with CANX and DDOST. Interacts with SQLE; this interaction modulates lipid droplet formation.

It localises to the membrane. The protein resides in the late endosome. Functionally, may modulate lipid droplet formation throught interaction with SQLE. The sequence is that of Small integral membrane protein 22 from Homo sapiens (Human).